Here is a 324-residue protein sequence, read N- to C-terminus: NADH-dependent D-xylose reductase (324 aa).

Tyrosine 54 functions as the Proton donor in the catalytic mechanism. Substrate is bound at residue histidine 116. 220–286 (SSFGPQSFLE…SNSPDRMAQN (67 aa)) contacts NAD(+).

This sequence belongs to the aldo/keto reductase family.

The enzyme catalyses xylitol + NAD(+) = D-xylose + NADH + H(+). The catalysed reaction is xylitol + NADP(+) = D-xylose + NADPH + H(+). The protein operates within carbohydrate metabolism; D-xylose degradation. In terms of biological role, reduces D-xylose into xylitol. Preferentially utilizes NADH as a cosubstrate. The sequence is that of NADH-dependent D-xylose reductase (XYL1) from Candida parapsilosis (Yeast).